Here is a 257-residue protein sequence, read N- to C-terminus: Imidazole glycerol phosphate synthase subunit HisF (257 aa).

Active-site residues include D12 and D131.

This sequence belongs to the HisA/HisF family. As to quaternary structure, heterodimer of HisH and HisF.

It is found in the cytoplasm. The catalysed reaction is 5-[(5-phospho-1-deoxy-D-ribulos-1-ylimino)methylamino]-1-(5-phospho-beta-D-ribosyl)imidazole-4-carboxamide + L-glutamine = D-erythro-1-(imidazol-4-yl)glycerol 3-phosphate + 5-amino-1-(5-phospho-beta-D-ribosyl)imidazole-4-carboxamide + L-glutamate + H(+). Its pathway is amino-acid biosynthesis; L-histidine biosynthesis; L-histidine from 5-phospho-alpha-D-ribose 1-diphosphate: step 5/9. Its function is as follows. IGPS catalyzes the conversion of PRFAR and glutamine to IGP, AICAR and glutamate. The HisF subunit catalyzes the cyclization activity that produces IGP and AICAR from PRFAR using the ammonia provided by the HisH subunit. The protein is Imidazole glycerol phosphate synthase subunit HisF of Burkholderia vietnamiensis (strain G4 / LMG 22486) (Burkholderia cepacia (strain R1808)).